The primary structure comprises 493 residues: Chitinase 1 (493 aa).

An N-terminal signal peptide occupies residues 1 to 20; sequence MISCNILGITIAAFITSTLA. Residues 27-318 form the GH18 domain; that stretch reads VNVMYYWGQN…HGSSAALGQA (292 aa). The active-site Proton donor is the glutamate 164.

The protein belongs to the glycosyl hydrolase 18 family. Chitinase class III subfamily.

The catalysed reaction is Random endo-hydrolysis of N-acetyl-beta-D-glucosaminide (1-&gt;4)-beta-linkages in chitin and chitodextrins.. This is Chitinase 1 (CHI1) from Rhizopus niveus.